An 88-amino-acid polypeptide reads, in one-letter code: MKLTCVIVAVLFLTAWTFVMADDPRDGPDTAVRGGKRFWKARNEMNSAASKLNKRECLEADYYCVLPFVGNGMCCSGICVFVCIAQKY.

A signal peptide spans 1–21; it reads MKLTCVIVAVLFLTAWTFVMA. The propeptide occupies 22–53; that stretch reads DDPRDGPDTAVRGGKRFWKARNEMNSAASKLN. Disulfide bonds link Cys-57/Cys-75, Cys-64/Cys-79, and Cys-74/Cys-83.

It belongs to the conotoxin O1 superfamily. In terms of tissue distribution, expressed by the venom duct.

Its subcellular location is the secreted. In Conus marmoreus (Marble cone), this protein is Conotoxin MaIr34.